A 148-amino-acid polypeptide reads, in one-letter code: Large ribosomal subunit protein bL9 (148 aa).

It belongs to the bacterial ribosomal protein bL9 family.

Binds to the 23S rRNA. This is Large ribosomal subunit protein bL9 from Methylobacillus flagellatus (strain ATCC 51484 / DSM 6875 / VKM B-1610 / KT).